Reading from the N-terminus, the 784-residue chain is 5-methyltetrahydropteroyltriglutamate--homocysteine methyltransferase (784 aa).

5-methyltetrahydropteroyltri-L-glutamate is bound by residues 16–19 and Lys112; that span reads RELK. Residues 460 to 462 and Glu513 contribute to the L-homocysteine site; that span reads IGS. L-methionine is bound by residues 460 to 462 and Glu513; that span reads IGS. Trp590 serves as a coordination point for 5-methyltetrahydropteroyltri-L-glutamate. Asp628 is an L-homocysteine binding site. Asp628 is an L-methionine binding site. Glu634 is a binding site for 5-methyltetrahydropteroyltri-L-glutamate. 3 residues coordinate Zn(2+): His670, Cys672, and Glu694. Residue His723 is the Proton donor of the active site. Cys755 is a binding site for Zn(2+).

It belongs to the vitamin-B12 independent methionine synthase family. Zn(2+) serves as cofactor.

The enzyme catalyses 5-methyltetrahydropteroyltri-L-glutamate + L-homocysteine = tetrahydropteroyltri-L-glutamate + L-methionine. It participates in amino-acid biosynthesis; L-methionine biosynthesis via de novo pathway; L-methionine from L-homocysteine (MetE route): step 1/1. Catalyzes the transfer of a methyl group from 5-methyltetrahydrofolate to homocysteine resulting in methionine formation. This is 5-methyltetrahydropteroyltriglutamate--homocysteine methyltransferase from Acidithiobacillus ferrooxidans (strain ATCC 23270 / DSM 14882 / CIP 104768 / NCIMB 8455) (Ferrobacillus ferrooxidans (strain ATCC 23270)).